Reading from the N-terminus, the 316-residue chain is uncharacterized protein (316 aa).

Residues 285 to 316 (APEGDLGDIIEVDPSEPRSDPYRRLRTPPPGG) form a disordered region. Acidic residues predominate over residues 289 to 298 (DLGDIIEVDP).

Its function is as follows. Possibly necessary for replication. This is an uncharacterized protein from Halobacterium salinarum (Halobacterium halobium).